A 154-amino-acid polypeptide reads, in one-letter code: MKLFVLCIFAMMATLAMSRSWTYVQPKFLNKAFEVALKEEIIVRWDRKLAKWLRVNGGPLSHVQKKALYFVNRRYMQTHWANYMLWINKKTDALGRTPVVGDYRRLGAEIGRRIDMVFFYKFLSGRNMIPKYMPYMEQINRMRAADIPVKYMGK.

The N-terminal stretch at 1 to 18 (MKLFVLCIFAMMATLAMS) is a signal peptide.

Homodimer. As to expression, sperm.

Dissolves the egg vitelline layer nonenzymatically during fertilization. It creates a hole of about 3 mu-m in diameter through which the sperm pass. This chain is Egg-lysin, found in Haliotis kamtschatkana (Pinto abalone).